The following is a 557-amino-acid chain: Probable asparagine synthetase [glutamine-hydrolyzing] (557 aa).

Residue cysteine 2 is the For GATase activity of the active site. The 187-residue stretch at 2–188 (CGILAILNSL…PGHYFSSKTK (187 aa)) folds into the Glutamine amidotransferase type-2 domain. L-glutamine contacts are provided by residues 50-54 (RLAIV), 75-77 (NGE), and aspartate 101. The region spanning 217–466 (AIKEAFEQAV…LPSSVLWRQK (250 aa)) is the Asparagine synthetase domain. Residues leucine 239, isoleucine 279, and 353 to 354 (SG) contribute to the ATP site. The interval 538-557 (WGASQDPSGRAQKVHLSTTE) is disordered.

The enzyme catalyses L-aspartate + L-glutamine + ATP + H2O = L-asparagine + L-glutamate + AMP + diphosphate + H(+). The protein operates within amino-acid biosynthesis; L-asparagine biosynthesis; L-asparagine from L-aspartate (L-Gln route): step 1/1. The protein is Probable asparagine synthetase [glutamine-hydrolyzing] (asns) of Dictyostelium discoideum (Social amoeba).